A 23-amino-acid chain; its full sequence is MFKPGYSEAKKPKITDEFSYKQT.

As to expression, during early embryogenesis expression is initially detected at the early cleavage stages in the nucleus of two discrete cells. Subsequently, expression is abundant in the cytoplasm of the newly formed pole cells. Male-specific expression during the third larval instar.

It is found in the cytoplasm. The protein localises to the nucleus. This Drosophila melanogaster (Fruit fly) protein is Protein male-specific 40.